The following is a 326-amino-acid chain: Malate dehydrogenase (326 aa).

Residue 11–17 (GAAGQIG) participates in NAD(+) binding. Residues Arg92 and Arg98 each contribute to the substrate site. Residues Asn105, Gln112, and 129 to 131 (VGN) contribute to the NAD(+) site. Substrate contacts are provided by Asn131 and Arg162. His187 serves as the catalytic Proton acceptor.

It belongs to the LDH/MDH superfamily. MDH type 2 family.

The catalysed reaction is (S)-malate + NAD(+) = oxaloacetate + NADH + H(+). Catalyzes the reversible oxidation of malate to oxaloacetate. In Halorhodospira halophila (strain DSM 244 / SL1) (Ectothiorhodospira halophila (strain DSM 244 / SL1)), this protein is Malate dehydrogenase.